The following is a 471-amino-acid chain: 6-phosphofructo-2-kinase/fructose-2,6-bisphosphatase 1 (471 aa).

The residue at position 2 (Ser-2) is an N-acetylserine. A 6-phosphofructo-2-kinase region spans residues 2 to 250 (SPEMGELTQT…VYYLMNIHVT (249 aa)). A Phosphoserine; by PKA modification is found at Ser-33. Residue 49–57 (GLPARGKTY) participates in ATP binding. Positions 82 and 105 each coordinate beta-D-fructose 6-phosphate. Residue Asp-131 is part of the active site. Beta-D-fructose 6-phosphate-binding residues include Thr-133 and Arg-139. At Ser-141 the chain carries Phosphoserine. Cys-161 is an active-site residue. 170 to 175 (NIRQVK) is a binding site for ATP. Residues Lys-175, Arg-196, and Tyr-200 each contribute to the beta-D-fructose 6-phosphate site. The segment at 251 to 471 (PRSIYLCRHG…EALDTVPAHY (221 aa)) is fructose-2,6-bisphosphatase. Arg-258 serves as a coordination point for beta-D-fructose 2,6-bisphosphate. The active-site Tele-phosphohistidine intermediate is the His-259. Residues Asn-265, Gly-271, and Arg-308 each coordinate beta-D-fructose 2,6-bisphosphate. Glu-328 acts as the Proton donor/acceptor in catalysis. Beta-D-fructose 2,6-bisphosphate-binding residues include Tyr-339, Arg-353, Lys-357, Tyr-368, Gln-394, and Arg-398. An ATP-binding site is contributed by 350 to 353 (FALR). Residues 394-398 (QAVMR) and Tyr-430 contribute to the ATP site.

The protein in the C-terminal section; belongs to the phosphoglycerate mutase family. Homodimer. Liver.

The catalysed reaction is beta-D-fructose 2,6-bisphosphate + H2O = beta-D-fructose 6-phosphate + phosphate. It catalyses the reaction beta-D-fructose 6-phosphate + ATP = beta-D-fructose 2,6-bisphosphate + ADP + H(+). With respect to regulation, phosphorylation at Ser-33 inhibits the kinase and activates the bisphosphatase. In terms of biological role, synthesis and degradation of fructose 2,6-bisphosphate. In Homo sapiens (Human), this protein is 6-phosphofructo-2-kinase/fructose-2,6-bisphosphatase 1.